We begin with the raw amino-acid sequence, 1276 residues long: Sterol regulatory element-binding protein cleavage-activating protein (1276 aa).

Over 1–18 (MTLTERLREKISQAFYNH) the chain is Cytoplasmic. A helical membrane pass occupies residues 19–39 (GLLCASYPIPIILFTGLCILA). The Lumenal segment spans residues 40-279 (CCYPLLKLPL…NLVHVHFKEE (240 aa)). The loop-1 stretch occupies residues 46–284 (KLPLPGTGPV…HFKEEIGIAE (239 aa)). The disordered stretch occupies residues 60–81 (PVKDYSPPPVDSDHKQGEPSEQ). Asparagine 263 is a glycosylation site (N-linked (GlcNAc...) asparagine). Residues 280–300 (IGIAELIPLVTTYIILFAYIY) form a helical membrane-spanning segment. In terms of domain architecture, SSD spans 284 to 442 (ELIPLVTTYI…MFFFTTVLSI (159 aa)). Residues 301-312 (FSTRKIDMVKSK) lie on the Cytoplasmic side of the membrane. A helical transmembrane segment spans residues 313-333 (WGLALAAVVTVLSSLLMSVGL). Topologically, residues 334-344 (CTLFGLTPTLN) are lumenal. Residues 345 to 365 (GGEIFPYLVVVIGLENVLVLT) form a helical membrane-spanning segment. Over 366-401 (KSVVSTPVDLEVKLRIAQGLSSESWSIMKNVATELG) the chain is Cytoplasmic. The helical transmembrane segment at 402 to 422 (IILIGYFTLVPAIQEFCLFAV) threads the bilayer. A topological domain (lumenal) is located at residue valine 423. Residues 424–444 (GLVSDFFLQMFFFTTVLSIDI) form a helical membrane-spanning segment. Topologically, residues 445–518 (RRMELADLNK…FLARTRLAQR (74 aa)) are cytoplasmic. Residues 447–452 (MELADL) carry the ER export signal motif. Glycyl lysine isopeptide (Lys-Gly) (interchain with G-Cter in ubiquitin) cross-links involve residues lysine 454 and lysine 466. Residues 519–539 (LIMAGTVVWIGILVYTDPAGL) traverse the membrane as a helical segment. The loop-7 stretch occupies residues 535-710 (DPAGLRTYLA…QAHGDITLYK (176 aa)). The Lumenal segment spans residues 540–708 (RTYLAAQVTE…GTQAHGDITL (169 aa)). 2 N-linked (GlcNAc...) asparagine glycosylation sites follow: asparagine 590 and asparagine 641. A helical transmembrane segment spans residues 709-729 (YKVAALGLAAGIVLVLLLLCL). The Cytoplasmic segment spans residues 730–1276 (YRVLCPRNYG…YVPSVLEKLD (547 aa)). An interaction with SREBF2 region spans residues 731–1276 (RVLCPRNYGQ…YVPSVLEKLD (546 aa)). Residues 771-811 (VLRGHLMDIECLASDGMLLVSCCLAGQVCVWDAQTGDCLTR) form a WD 1 repeat. The segment at 816-903 (GSRRDSCGGG…RHRAGCGRAR (88 aa)) is disordered. Residues serine 821, serine 837, serine 843, serine 850, serine 905, and serine 934 each carry the phosphoserine modification. The segment at 928 to 957 (PALRPPSPGSPLPQASQEDGAAPEKGSPPL) is disordered. WD repeat units follow at residues 949–999 (APEK…LCCS) and 1002–1039 (EVSS…SLSP). Arginine 1048 is modified (omega-N-methylarginine). WD repeat units lie at residues 1074 to 1111 (AHQK…CLFT), 1114 to 1152 (GHSG…RVSH), 1155 to 1192 (AHRG…KLYS), and 1194 to 1232 (QQDL…LLQT).

It belongs to the WD repeat SCAP family. In terms of assembly, membrane region forms a homotetramer. Component of the SCAP-SREBP complex (composed of SCAP and SREBF1/SREBP1 or SREBF2/SREBP2); interacts with SREBF1/SREBP1 or SREBF2/SREBP2 through its C-terminal cytoplasmic domain. Forms a ternary complex with INSIG1 or INSIG2 through its transmembrane domains at high sterol concentrations. Interacts with PAQR3; the interaction anchors the SCAP-SREBP complex to the Golgi apparatus in low cholesterol conditions. Interacts with the SEC23-SEC24 complex in a SAR1-GTP-dependent manner through an ER export signal in its third cytoplasmic loop. Interacts with RNF139; the interaction inhibits the interaction of SCAP with SEC24B and hampering the ER to Golgi transport of the SCAP-SREBP complex. Interacts with SPRING. In terms of processing, ubiquitinated at Lys-454 and Lys-466. RNF145 triggers ubiquitination of SCAP, likely inhibiting SCAP-SREBP complex transport to the Golgi apparatus and the subsequent processing/maturation of SREBF2/SREBP2.

It is found in the endoplasmic reticulum membrane. The protein resides in the golgi apparatus membrane. Its subcellular location is the cytoplasmic vesicle. It localises to the COPII-coated vesicle membrane. Escort protein required for cholesterol as well as lipid homeostasis. Regulates export of the SCAP-SREBP complex from the endoplasmic reticulum to the Golgi upon low cholesterol, thereby regulating the processing of sterol regulatory element-binding proteins (SREBPs) SREBF1/SREBP1 and SREBF2/SREBP2. At high sterol concentrations, formation of a ternary complex with INSIG (INSIG1 or INSIG2) leads to mask the ER export signal in SCAP, promoting retention of the complex in the endoplasmic reticulum. Low sterol concentrations trigger release of INSIG, a conformational change in the SSD domain of SCAP, unmasking of the ER export signal, promoting recruitment into COPII-coated vesicles and transport of the SCAP-SREBP to the Golgi: in the Golgi, SREBPs are then processed, releasing the transcription factor fragment of SREBPs from the membrane, its import into the nucleus and up-regulation of LDLR, INSIG1 and the mevalonate pathway. Binds cholesterol via its SSD domain. This Cricetulus griseus (Chinese hamster) protein is Sterol regulatory element-binding protein cleavage-activating protein.